We begin with the raw amino-acid sequence, 114 residues long: Ig heavy chain V-A2 region BS-1 (114 aa).

The residue at position 1 (glutamine 1) is a Pyrrolidone carboxylic acid. Residues 1-107 (QSVKESEGGL…YLGLMDVWGP (107 aa)) enclose the Ig-like domain.

The polypeptide is Ig heavy chain V-A2 region BS-1 (Oryctolagus cuniculus (Rabbit)).